The following is a 274-amino-acid chain: D-aminopeptidase (274 aa).

Aspartate 8, glutamate 10, histidine 60, and histidine 104 together coordinate Zn(2+). The Nucleophile role is filled by histidine 115. Glutamate 133 contacts Zn(2+).

It belongs to the peptidase M55 family. Homodecamer. A 20 Angstroms wide channel runs through the complex, giving access to a central chamber holding the active sites. It depends on Zn(2+) as a cofactor.

In terms of biological role, hydrolyzes N-terminal residues in D-amino acid containing peptides. Among the tested substrates, the highest activities are with D-Ala-D-Ala and D-Ala-Gly-Gly. The physiological role is not clear. The chain is D-aminopeptidase (dppA) from Bacillus subtilis (strain 168).